A 421-amino-acid polypeptide reads, in one-letter code: Protein MID1-COMPLEMENTING ACTIVITY 1 (421 aa).

Positions 188 to 218 (RFCEALKTENEKLQIELQRSQEHYDVAQCEV) form a coiled coil. Residues 233-288 (EPDSEKELTKKASKKSERSSSMKTEYSYDEDSPKKSSTRAASRSTSNVSSGHDLLS) are disordered. Residues 235–252 (DSEKELTKKASKKSERSS) are compositionally biased toward basic and acidic residues. Low complexity predominate over residues 270-282 (TRAASRSTSNVSS). Residues 346–362 (LMAYSLILSCCCYTCCV) form a helical membrane-spanning segment.

Expressed in roots, leaves, stems, flowers and siliques. Expressed in vascular tissues of cotyledons, leaves and primary root, in the promeristem and adjacent elongation zone of the primary root and in the shoot apical meristem. Detected in the stele and endodermis, but not in the cortex, epidermis or root cap, including the columella. Not expressed in root hairs or in mesophyll cells of leaves and cotyledons.

It localises to the cell membrane. Inhibited by GdCl(3), but not by verapamil. Its function is as follows. Calcium-permeable stretch-activated channel component. Involved in mechano-stimulated calcium uptake mechanism and in mechanosensing in the primary root. The chain is Protein MID1-COMPLEMENTING ACTIVITY 1 (MCA1) from Arabidopsis thaliana (Mouse-ear cress).